The sequence spans 619 residues: Dihydroxy-acid dehydratase 1 (619 aa).

Asp81 is a binding site for Mg(2+). Cys122 lines the [2Fe-2S] cluster pocket. Mg(2+)-binding residues include Asp123 and Lys124. N6-carboxylysine is present on Lys124. Cys198 contacts [2Fe-2S] cluster. Glu494 serves as a coordination point for Mg(2+). The active-site Proton acceptor is the Ser520.

The protein belongs to the IlvD/Edd family. In terms of assembly, homodimer. [2Fe-2S] cluster is required as a cofactor. The cofactor is Mg(2+).

It carries out the reaction (2R)-2,3-dihydroxy-3-methylbutanoate = 3-methyl-2-oxobutanoate + H2O. The catalysed reaction is (2R,3R)-2,3-dihydroxy-3-methylpentanoate = (S)-3-methyl-2-oxopentanoate + H2O. The protein operates within amino-acid biosynthesis; L-isoleucine biosynthesis; L-isoleucine from 2-oxobutanoate: step 3/4. Its pathway is amino-acid biosynthesis; L-valine biosynthesis; L-valine from pyruvate: step 3/4. Functions in the biosynthesis of branched-chain amino acids. Catalyzes the dehydration of (2R,3R)-2,3-dihydroxy-3-methylpentanoate (2,3-dihydroxy-3-methylvalerate) into 2-oxo-3-methylpentanoate (2-oxo-3-methylvalerate) and of (2R)-2,3-dihydroxy-3-methylbutanoate (2,3-dihydroxyisovalerate) into 2-oxo-3-methylbutanoate (2-oxoisovalerate), the penultimate precursor to L-isoleucine and L-valine, respectively. This is Dihydroxy-acid dehydratase 1 from Bordetella bronchiseptica (strain ATCC BAA-588 / NCTC 13252 / RB50) (Alcaligenes bronchisepticus).